We begin with the raw amino-acid sequence, 777 residues long: Penicillin-binding protein 1B (777 aa).

Residues 1 to 30 (MTRKSSNRSRGRKARSGKSASSSKLQIWLG) lie on the Cytoplasmic side of the membrane. The helical; Signal-anchor for type II membrane protein transmembrane segment at 31-52 (RIWSIGWKLALTLAAVLVFIGI) threads the bilayer. The Periplasmic segment spans residues 53–777 (YLDSMIKQRF…TEWIKKLFEW (725 aa)). The transglycosylase stretch occupies residues 162-334 (LRLEPKLMGM…SYYNPMRYAE (173 aa)). Glutamate 200 functions as the Proton donor; for transglycosylase activity in the catalytic mechanism. Residues 415-709 (SKLEQAIHDQ…ASGALRVYAQ (295 aa)) are transpeptidase. Serine 476 functions as the Acyl-ester intermediate; for transpeptidase activity in the catalytic mechanism.

In the N-terminal section; belongs to the glycosyltransferase 51 family. It in the C-terminal section; belongs to the transpeptidase family.

It localises to the cell inner membrane. It carries out the reaction [GlcNAc-(1-&gt;4)-Mur2Ac(oyl-L-Ala-gamma-D-Glu-L-Lys-D-Ala-D-Ala)](n)-di-trans,octa-cis-undecaprenyl diphosphate + beta-D-GlcNAc-(1-&gt;4)-Mur2Ac(oyl-L-Ala-gamma-D-Glu-L-Lys-D-Ala-D-Ala)-di-trans,octa-cis-undecaprenyl diphosphate = [GlcNAc-(1-&gt;4)-Mur2Ac(oyl-L-Ala-gamma-D-Glu-L-Lys-D-Ala-D-Ala)](n+1)-di-trans,octa-cis-undecaprenyl diphosphate + di-trans,octa-cis-undecaprenyl diphosphate + H(+). The catalysed reaction is Preferential cleavage: (Ac)2-L-Lys-D-Ala-|-D-Ala. Also transpeptidation of peptidyl-alanyl moieties that are N-acyl substituents of D-alanine.. It functions in the pathway cell wall biogenesis; peptidoglycan biosynthesis. Its function is as follows. Cell wall formation. Synthesis of cross-linked peptidoglycan from the lipid intermediates. The enzyme has a penicillin-insensitive transglycosylase N-terminal domain (formation of linear glycan strands) and a penicillin-sensitive transpeptidase C-terminal domain (cross-linking of the peptide subunits). The polypeptide is Penicillin-binding protein 1B (mrcB) (Vibrio cholerae serotype O1 (strain ATCC 39315 / El Tor Inaba N16961)).